Here is a 364-residue protein sequence, read N- to C-terminus: tRNA 2-selenouridine synthase (364 aa).

The Rhodanese domain maps to 14–137; sequence LIADTPIIDV…LRQAAIQATI (124 aa). The active-site S-selanylcysteine intermediate is Cys97.

It belongs to the SelU family. As to quaternary structure, monomer.

It carries out the reaction 5-methylaminomethyl-2-thiouridine(34) in tRNA + selenophosphate + (2E)-geranyl diphosphate + H2O + H(+) = 5-methylaminomethyl-2-selenouridine(34) in tRNA + (2E)-thiogeraniol + phosphate + diphosphate. It catalyses the reaction 5-methylaminomethyl-2-thiouridine(34) in tRNA + (2E)-geranyl diphosphate = 5-methylaminomethyl-S-(2E)-geranyl-thiouridine(34) in tRNA + diphosphate. The enzyme catalyses 5-methylaminomethyl-S-(2E)-geranyl-thiouridine(34) in tRNA + selenophosphate + H(+) = 5-methylaminomethyl-2-(Se-phospho)selenouridine(34) in tRNA + (2E)-thiogeraniol. The catalysed reaction is 5-methylaminomethyl-2-(Se-phospho)selenouridine(34) in tRNA + H2O = 5-methylaminomethyl-2-selenouridine(34) in tRNA + phosphate. Its function is as follows. Involved in the post-transcriptional modification of the uridine at the wobble position (U34) of tRNA(Lys), tRNA(Glu) and tRNA(Gln). Catalyzes the conversion of 2-thiouridine (S2U-RNA) to 2-selenouridine (Se2U-RNA). Acts in a two-step process involving geranylation of 2-thiouridine (S2U) to S-geranyl-2-thiouridine (geS2U) and subsequent selenation of the latter derivative to 2-selenouridine (Se2U) in the tRNA chain. The chain is tRNA 2-selenouridine synthase from Shigella sonnei (strain Ss046).